The sequence spans 283 residues: Acetyl-coenzyme A carboxylase carboxyl transferase subunit beta (283 aa).

The CoA carboxyltransferase N-terminal domain maps to 29-283 (LWISCPKCQQ…VKIHSMKGAF (255 aa)). Zn(2+) is bound by residues Cys-33, Cys-36, Cys-51, and Cys-54. The C4-type zinc finger occupies 33 to 54 (CPKCQQSIYHKDLGKYKTCPNC).

Belongs to the AccD/PCCB family. In terms of assembly, acetyl-CoA carboxylase is a heterohexamer composed of biotin carboxyl carrier protein (AccB), biotin carboxylase (AccC) and two subunits each of ACCase subunit alpha (AccA) and ACCase subunit beta (AccD). Zn(2+) is required as a cofactor.

It localises to the cytoplasm. It carries out the reaction N(6)-carboxybiotinyl-L-lysyl-[protein] + acetyl-CoA = N(6)-biotinyl-L-lysyl-[protein] + malonyl-CoA. The protein operates within lipid metabolism; malonyl-CoA biosynthesis; malonyl-CoA from acetyl-CoA: step 1/1. In terms of biological role, component of the acetyl coenzyme A carboxylase (ACC) complex. Biotin carboxylase (BC) catalyzes the carboxylation of biotin on its carrier protein (BCCP) and then the CO(2) group is transferred by the transcarboxylase to acetyl-CoA to form malonyl-CoA. The polypeptide is Acetyl-coenzyme A carboxylase carboxyl transferase subunit beta (Ligilactobacillus salivarius (strain UCC118) (Lactobacillus salivarius)).